A 52-amino-acid polypeptide reads, in one-letter code: Conotoxin Cal6.25 (52 aa).

Positions 1 to 22 are cleaved as a signal peptide; that stretch reads MKLTHVLIVAVLVLTVCHLTMA. Disulfide bonds link C24–C41, C31–C45, and C40–C50.

In terms of tissue distribution, expressed by the venom duct.

Its subcellular location is the secreted. Functionally, probable neurotoxin. The chain is Conotoxin Cal6.25 from Californiconus californicus (California cone).